The following is a 318-amino-acid chain: Methionyl-tRNA formyltransferase (318 aa).

112–115 (SILP) provides a ligand contact to (6S)-5,6,7,8-tetrahydrofolate.

Belongs to the Fmt family.

It carries out the reaction L-methionyl-tRNA(fMet) + (6R)-10-formyltetrahydrofolate = N-formyl-L-methionyl-tRNA(fMet) + (6S)-5,6,7,8-tetrahydrofolate + H(+). Its function is as follows. Attaches a formyl group to the free amino group of methionyl-tRNA(fMet). The formyl group appears to play a dual role in the initiator identity of N-formylmethionyl-tRNA by promoting its recognition by IF2 and preventing the misappropriation of this tRNA by the elongation apparatus. The chain is Methionyl-tRNA formyltransferase from Shewanella sp. (strain MR-4).